Here is a 432-residue protein sequence, read N- to C-terminus: MKFSYSFVQVVTLLLSLSPSVEGFTRSRNDACKPNHPFRPLPPSQPRTKTCHVVSNGHGKDDSKNIMKALHKCNNGGKVVFDANKVYTVGTALDMTFLKHIDLEVLGKIQFTNDTDYWQANSFKHGFQNATTFFQLGGEDVNVYGGGTLDGNGQVWYDLYAEDALILRPILFGVIGLKGGTIGPLKLRYSPQWYQLVANSSDVIFDGIDISGYSSSKNEAKNTDGWDTYRSDNIVIQNSVINNGDDCVSFKPNSTNILVQNLHCNGSHGISVGSLGQYKGEVDIVQNVLVYNISMYNASDGARIKVWPGVSSAMSEDLQGGGGLGSVKNVTYNQMYIENVDWAIEVTQCYGQKNLTLCNEYPSNLTISDIHFKNFRGTTSGKRDPNVGTIVCSSPNVCSDIYAENIDVKSPKGTDNFVCTNVDKSLLDVNCA.

The N-terminal stretch at 1-23 is a signal peptide; that stretch reads MKFSYSFVQVVTLLLSLSPSVEG. N-linked (GlcNAc...) asparagine glycosylation is found at asparagine 113, asparagine 129, and asparagine 199. The PbH1 1 repeat unit spans residues 231–252; that stretch reads SDNIVIQNSVINNGDDCVSFKP. The active-site Proton donor is the aspartate 245. Cysteine 247 and cysteine 264 are disulfide-bonded. 2 N-linked (GlcNAc...) asparagine glycosylation sites follow: asparagine 253 and asparagine 265. PbH1 repeat units follow at residues 254 to 274, 285 to 306, and 327 to 348; these read STNILVQNLHCNGSHGISVGS, VQNVLVYNISMYNASDGARIKV, and VKNVTYNQMYIENVDWAIEVTQ. Residue histidine 268 is part of the active site. Asparagine 292, asparagine 297, asparagine 329, asparagine 354, and asparagine 364 each carry an N-linked (GlcNAc...) asparagine glycan. A PbH1 5 repeat occupies 362-394; it reads PSNLTISDIHFKNFRGTTSGKRDPNVGTIVCSS. The cysteines at positions 392 and 398 are disulfide-linked.

It belongs to the glycosyl hydrolase 28 family.

It is found in the secreted. It catalyses the reaction [(1-&gt;4)-alpha-D-galacturonosyl](n) + H2O = alpha-D-galacturonate + [(1-&gt;4)-alpha-D-galacturonosyl](n-1). In terms of biological role, specific in hydrolyzing the terminal glycosidic bond of polygalacturonic acid and oligogalacturonates. The polypeptide is Probable exopolygalacturonase X (pgaX) (Aspergillus fumigatus (strain CBS 144.89 / FGSC A1163 / CEA10) (Neosartorya fumigata)).